The primary structure comprises 148 residues: FAD synthase (148 aa).

ATP-binding positions include 5–6 (TF), 10–13 (HPGH), D92, and Y119.

Belongs to the archaeal FAD synthase family. In terms of assembly, homodimer. The cofactor is a divalent metal cation.

The enzyme catalyses FMN + ATP + H(+) = FAD + diphosphate. It functions in the pathway cofactor biosynthesis; FAD biosynthesis; FAD from FMN: step 1/1. Functionally, catalyzes the transfer of the AMP portion of ATP to flavin mononucleotide (FMN) to produce flavin adenine dinucleotide (FAD) coenzyme. This is FAD synthase from Methanosphaera stadtmanae (strain ATCC 43021 / DSM 3091 / JCM 11832 / MCB-3).